Consider the following 329-residue polypeptide: DNA-directed RNA polymerase subunit alpha (329 aa).

The alpha N-terminal domain (alpha-NTD) stretch occupies residues 1–235 (MQGSVTEFLK…EQLEAFVDLR (235 aa)). The alpha C-terminal domain (alpha-CTD) stretch occupies residues 249 to 329 (FDPILLRPVD…NWPPASIADE (81 aa)).

This sequence belongs to the RNA polymerase alpha chain family. In terms of assembly, homodimer. The RNAP catalytic core consists of 2 alpha, 1 beta, 1 beta' and 1 omega subunit. When a sigma factor is associated with the core the holoenzyme is formed, which can initiate transcription.

The enzyme catalyses RNA(n) + a ribonucleoside 5'-triphosphate = RNA(n+1) + diphosphate. Functionally, DNA-dependent RNA polymerase catalyzes the transcription of DNA into RNA using the four ribonucleoside triphosphates as substrates. This chain is DNA-directed RNA polymerase subunit alpha, found in Pectobacterium atrosepticum (strain SCRI 1043 / ATCC BAA-672) (Erwinia carotovora subsp. atroseptica).